The primary structure comprises 574 residues: Multidrug and toxin extrusion protein 1 (574 aa).

The Cytoplasmic segment spans residues 1-51; that stretch reads MEGQAAETNHRAETVVRAELCLSAEQGPETTAYSQKRCLFLPMEVWQEAQQ. A helical transmembrane segment spans residues 52 to 72; that stretch reads LLALAAPAFLSQLMIFLISIV. Over 73 to 86 the chain is Extracellular; the sequence is SSIFCGHLGKVELD. The chain crosses the membrane as a helical span at residues 87–107; sequence AVSLAITIINITGVAVGTGLA. Residues 108–133 lie on the Cytoplasmic side of the membrane; the sequence is GACDTLISQTFGGSNLKLVGIILQRG. Residues 134–154 form a helical membrane-spanning segment; sequence ILILLLFCFPCWALLINTESI. The Extracellular portion of the chain corresponds to 155 to 168; the sequence is LLLFRQDPEVSKLT. Residues 169–189 form a helical membrane-spanning segment; it reads QIYVLIFLPALPAAFLYQLLA. At 190–204 the chain is on the cytoplasmic side; that stretch reads KYLQNQGIIYPQVLT. Residues 205–225 form a helical membrane-spanning segment; that stretch reads GFIANIFNALFNYILLYVLGL. Topologically, residues 226-230 are extracellular; the sequence is GVMGS. A helical transmembrane segment spans residues 231–251; that stretch reads ACANTVSQFIQMILLFLYIVW. The Cytoplasmic portion of the chain corresponds to 252-271; the sequence is RRLYADTWGGWSQACFEEWG. Residues 272–291 traverse the membrane as a helical segment; the sequence is AFIRLAVASMLMLCIEWWAF. The Extracellular portion of the chain corresponds to 292 to 309; that stretch reads EISMFLAGVLGMVDLAAQ. Residues 310-330 form a helical membrane-spanning segment; the sequence is AIIYQVAIVVYLIPLGLCIAG. The Cytoplasmic portion of the chain corresponds to 331–350; that stretch reads SIRVGHGLGAGNTEQAKRSA. Residues 351 to 371 form a helical membrane-spanning segment; it reads LVVLCMTELCALLSGILLATL. Residues 372-384 are Extracellular-facing; that stretch reads KDVVAYIFTSDPN. The helical transmembrane segment at 385–405 threads the bilayer; it reads IVALVSYVLPVYSACLLFDAC. The Cytoplasmic segment spans residues 406–430; that stretch reads VAACGGILRGSGKLKVGAISHTVGY. Residues 431-451 traverse the membrane as a helical segment; it reads YVIGLPLGISLMFAAKLGIIG. Over 452–453 the chain is Extracellular; sequence FW. The helical transmembrane segment at 454 to 472 threads the bilayer; sequence FGILACGIAQSIFLIIFVF. At 473–549 the chain is on the cytoplasmic side; the sequence is KIDWKRASEE…AGAAQHTRTL (77 aa). The interval 500-541 is disordered; the sequence is KPSVYQEGCPTEQGDVDPGNVESIEFSQSSTSSEGTSPTPAG. Residues 521–538 are compositionally biased toward low complexity; that stretch reads ESIEFSQSSTSSEGTSPT. Residues 550–570 form a helical membrane-spanning segment; it reads ILTRGLALGCAVGTLIIGIVI. Over 571 to 574 the chain is Extracellular; sequence RLSV.

The protein belongs to the multi antimicrobial extrusion (MATE) (TC 2.A.66.1) family.

It is found in the cell membrane. Its subcellular location is the apical cell membrane. It catalyses the reaction thiamine(out) + H(+)(in) = thiamine(in) + H(+)(out). The catalysed reaction is estrone 3-sulfate(in) + H(+)(out) = estrone 3-sulfate(out) + H(+)(in). The enzyme catalyses creatinine(in) + H(+)(out) = creatinine(out) + H(+)(in). It carries out the reaction agmatine(in) + H(+)(out) = agmatine(out) + H(+)(in). Multidrug efflux pump that functions as a H(+)/organic cation antiporter. Mediates the secretion of cationic compounds including drugs, toxins and endogenous metabolites. Plays a role physiological role in the excretion of drugs, toxins and endogenous metabolites through the kidney and liver, into urine and bile respectively. This Xenopus tropicalis (Western clawed frog) protein is Multidrug and toxin extrusion protein 1 (slc47a1).